Reading from the N-terminus, the 120-residue chain is Large ribosomal subunit protein bL19 (120 aa).

Belongs to the bacterial ribosomal protein bL19 family.

Functionally, this protein is located at the 30S-50S ribosomal subunit interface and may play a role in the structure and function of the aminoacyl-tRNA binding site. The polypeptide is Large ribosomal subunit protein bL19 (Microcystis aeruginosa (strain NIES-843 / IAM M-2473)).